The sequence spans 148 residues: Lysozyme C (148 aa).

An N-terminal signal peptide occupies residues 1-18 (MKALIVLGLVLLSVTVQG). The region spanning 19-148 (KVFERCELAR…VRQYVQGCGV (130 aa)) is the C-type lysozyme domain. 4 cysteine pairs are disulfide-bonded: Cys-24/Cys-146, Cys-48/Cys-134, Cys-83/Cys-99, and Cys-95/Cys-113. Residues Glu-53 and Asp-71 contribute to the active site.

Belongs to the glycosyl hydrolase 22 family. In terms of assembly, monomer.

Its subcellular location is the secreted. The enzyme catalyses Hydrolysis of (1-&gt;4)-beta-linkages between N-acetylmuramic acid and N-acetyl-D-glucosamine residues in a peptidoglycan and between N-acetyl-D-glucosamine residues in chitodextrins.. Functionally, lysozymes have primarily a bacteriolytic function; those in tissues and body fluids are associated with the monocyte-macrophage system and enhance the activity of immunoagents. The chain is Lysozyme C (LYZ) from Homo sapiens (Human).